Reading from the N-terminus, the 225-residue chain is UPF0758 protein Shew_3481 (225 aa).

The MPN domain occupies I102–I224. Zn(2+) is bound by residues H173, H175, and D186. The short motif at H173–D186 is the JAMM motif element.

The protein belongs to the UPF0758 family.

This chain is UPF0758 protein Shew_3481, found in Shewanella loihica (strain ATCC BAA-1088 / PV-4).